The following is a 143-amino-acid chain: Large ribosomal subunit protein uL15 (143 aa).

Residues 1–52 form a disordered region; the sequence is MKLNTLAPAAGSKSAPKRLGRGIGSGLGKTSGKGHKGQKARSGGYHKVGFEG. Gly residues predominate over residues 21–31; the sequence is RGIGSGLGKTS.

It belongs to the universal ribosomal protein uL15 family. Part of the 50S ribosomal subunit.

Binds to the 23S rRNA. In Francisella tularensis subsp. tularensis (strain FSC 198), this protein is Large ribosomal subunit protein uL15.